The sequence spans 1008 residues: Chitin synthase C (1008 aa).

The disordered stretch occupies residues 1-160 (MIYEMMVMKR…GGRTIDPNNR (160 aa)). A compositionally biased stretch (low complexity) spans 10 to 19 (RSANSRAQNN). Over residues 34–45 (ESPSRPVSSLGN) the composition is skewed to polar residues. N-linked (GlcNAc...) asparagine glycosylation is present at Asn-312. Transmembrane regions (helical) follow at residues 642-662 (FMQL…FYFI), 682-702 (IFVI…IISM), 717-737 (IIVY…LVVI), 755-775 (LFVN…YASF), and 787-807 (SAAY…YAFC). A glycan (N-linked (GlcNAc...) asparagine) is linked at Asn-833. A run of 2 helical transmembrane segments spans residues 887–907 (MVSI…EVYG) and 910–930 (AGGT…LALI). Asn-961 carries N-linked (GlcNAc...) asparagine glycosylation.

The protein belongs to the chitin synthase family. Class II subfamily.

The protein localises to the cell membrane. It carries out the reaction [(1-&gt;4)-N-acetyl-beta-D-glucosaminyl](n) + UDP-N-acetyl-alpha-D-glucosamine = [(1-&gt;4)-N-acetyl-beta-D-glucosaminyl](n+1) + UDP + H(+). Its function is as follows. Polymerizes chitin, a structural polymer of the cell wall and septum, by transferring the sugar moiety of UDP-GlcNAc to the non-reducing end of the growing chitin polymer. Involved in cell wall integrity and mycelial morphology. Plays an important role in septal growth or maintenance. Acts as a positive regulator of conidiation, cellular responses to oxidative stresses, and the production of malic acid. Negatively regulates the citric acid production. This is Chitin synthase C from Aspergillus niger (strain ATCC MYA-4892 / CBS 513.88 / FGSC A1513).